Reading from the N-terminus, the 433-residue chain is Citrate synthase, mitochondrial (433 aa).

Active-site residues include His274 and His320. Oxaloacetate is bound at residue Arg329. Asp375 is a catalytic residue. Positions 401 and 421 each coordinate oxaloacetate.

This sequence belongs to the citrate synthase family. As to quaternary structure, homodimer.

The protein localises to the mitochondrion matrix. The catalysed reaction is oxaloacetate + acetyl-CoA + H2O = citrate + CoA + H(+). It participates in carbohydrate metabolism; tricarboxylic acid cycle; isocitrate from oxaloacetate: step 1/2. In terms of biological role, key enzyme of the Krebs tricarboxylic acid cycle which catalyzes the synthesis of citrate from acetyl coenzyme A and oxaloacetate. The chain is Citrate synthase, mitochondrial (CS) from Gallus gallus (Chicken).